The sequence spans 398 residues: AT-rich interactive domain-containing protein 6 (398 aa).

The interval 25–87 (EPLEPENDHN…PKTEGENAKK (63 aa)) is disordered. One can recognise an ARID domain in the interval 106-197 (PVEQVAFLRE…ALLEYEKCLR (92 aa)). A disordered region spans residues 213–236 (SSVEKEPSSHQGSGSGRARRDSAA). The region spanning 305–398 (VGPVADWVKI…RLFIRVPFEQ (94 aa)) is the sHSP domain.

Belongs to the small heat shock protein (HSP20) family.

The protein resides in the nucleus. The sequence is that of AT-rich interactive domain-containing protein 6 (ARID6) from Arabidopsis thaliana (Mouse-ear cress).